The following is a 534-amino-acid chain: ATP-dependent RNA helicase DBP3 (534 aa).

Positions 1–96 are disordered; the sequence is MGSKRKHESG…VSSSSSGYTQ (96 aa). The segment covering 8–30 has biased composition (basic and acidic residues); it reads ESGDVEVKKPKHDNEVKGKEKKE. Positions 31–53 are enriched in basic residues; sequence KKEKKEKKEKKEKKEKKEKKEKK. Over residues 54–63 the composition is skewed to basic and acidic residues; the sequence is EKKEKNEKKE. Positions 82–92 are enriched in low complexity; that stretch reads STVSTVSSSSS. The Q motif motif lies at 131 to 157; that stretch reads LSFDHVQLQSKIAPIVTKFPKPTPIQS. The Helicase ATP-binding domain occupies 160–330; that stretch reads WPYLLNGDDV…ATFMNKAVKV (171 aa). 173–180 provides a ligand contact to ATP; it reads AETGSGKT. A DEAD box motif is present at residues 278–281; that stretch reads DEAD. Positions 359–504 constitute a Helicase C-terminal domain; sequence RLLQLLRQYG…PVPDELLKFG (146 aa).

It belongs to the DEAD box helicase family. DDX5/DBP2 subfamily.

Its subcellular location is the nucleus. The protein resides in the nucleolus. It catalyses the reaction ATP + H2O = ADP + phosphate + H(+). In terms of biological role, ATP-dependent RNA helicase required for 60S ribosomal subunit synthesis. Involved in efficient pre-rRNA processing, predominantly at site A3, which is necessary for the normal formation of 25S and 5.8S rRNAs. The chain is ATP-dependent RNA helicase DBP3 (DBP3) from Meyerozyma guilliermondii (strain ATCC 6260 / CBS 566 / DSM 6381 / JCM 1539 / NBRC 10279 / NRRL Y-324) (Yeast).